Consider the following 195-residue polypeptide: Dual-action ribosomal maturation protein DarP (195 aa).

The protein belongs to the DarP family.

Its subcellular location is the cytoplasm. Functionally, member of a network of 50S ribosomal subunit biogenesis factors which assembles along the 30S-50S interface, preventing incorrect 23S rRNA structures from forming. Promotes peptidyl transferase center (PTC) maturation. The chain is Dual-action ribosomal maturation protein DarP from Stenotrophomonas maltophilia (strain K279a).